We begin with the raw amino-acid sequence, 302 residues long: UDP-3-O-acyl-N-acetylglucosamine deacetylase (302 aa).

3 residues coordinate Zn(2+): His-78, His-237, and Asp-241. His-264 functions as the Proton donor in the catalytic mechanism.

This sequence belongs to the LpxC family. The cofactor is Zn(2+).

It carries out the reaction a UDP-3-O-[(3R)-3-hydroxyacyl]-N-acetyl-alpha-D-glucosamine + H2O = a UDP-3-O-[(3R)-3-hydroxyacyl]-alpha-D-glucosamine + acetate. It participates in glycolipid biosynthesis; lipid IV(A) biosynthesis; lipid IV(A) from (3R)-3-hydroxytetradecanoyl-[acyl-carrier-protein] and UDP-N-acetyl-alpha-D-glucosamine: step 2/6. Catalyzes the hydrolysis of UDP-3-O-myristoyl-N-acetylglucosamine to form UDP-3-O-myristoylglucosamine and acetate, the committed step in lipid A biosynthesis. This Hahella chejuensis (strain KCTC 2396) protein is UDP-3-O-acyl-N-acetylglucosamine deacetylase.